A 456-amino-acid chain; its full sequence is Bifunctional protein GlmU (456 aa).

The interval 1–229 (MLNSAMSVVI…ISETDGVNNR (229 aa)) is pyrophosphorylase. UDP-N-acetyl-alpha-D-glucosamine contacts are provided by residues 11–14 (LAAG), K25, Q76, 81–82 (GT), 103–105 (YGD), G140, E154, N169, and N227. D105 lines the Mg(2+) pocket. Position 227 (N227) interacts with Mg(2+). Positions 230-250 (LQLSRLERIYQAEQAEKLLLS) are linker. Positions 251–456 (GVMLRDPARF…QGWQRPVKKK (206 aa)) are N-acetyltransferase. UDP-N-acetyl-alpha-D-glucosamine-binding residues include R333 and K351. H363 serves as the catalytic Proton acceptor. UDP-N-acetyl-alpha-D-glucosamine-binding residues include Y366 and N377. Residues A380, 386-387 (NY), S405, A423, and R440 contribute to the acetyl-CoA site.

In the N-terminal section; belongs to the N-acetylglucosamine-1-phosphate uridyltransferase family. The protein in the C-terminal section; belongs to the transferase hexapeptide repeat family. Homotrimer. The cofactor is Mg(2+).

The protein resides in the cytoplasm. It catalyses the reaction alpha-D-glucosamine 1-phosphate + acetyl-CoA = N-acetyl-alpha-D-glucosamine 1-phosphate + CoA + H(+). It carries out the reaction N-acetyl-alpha-D-glucosamine 1-phosphate + UTP + H(+) = UDP-N-acetyl-alpha-D-glucosamine + diphosphate. It participates in nucleotide-sugar biosynthesis; UDP-N-acetyl-alpha-D-glucosamine biosynthesis; N-acetyl-alpha-D-glucosamine 1-phosphate from alpha-D-glucosamine 6-phosphate (route II): step 2/2. Its pathway is nucleotide-sugar biosynthesis; UDP-N-acetyl-alpha-D-glucosamine biosynthesis; UDP-N-acetyl-alpha-D-glucosamine from N-acetyl-alpha-D-glucosamine 1-phosphate: step 1/1. The protein operates within bacterial outer membrane biogenesis; LPS lipid A biosynthesis. Its function is as follows. Catalyzes the last two sequential reactions in the de novo biosynthetic pathway for UDP-N-acetylglucosamine (UDP-GlcNAc). The C-terminal domain catalyzes the transfer of acetyl group from acetyl coenzyme A to glucosamine-1-phosphate (GlcN-1-P) to produce N-acetylglucosamine-1-phosphate (GlcNAc-1-P), which is converted into UDP-GlcNAc by the transfer of uridine 5-monophosphate (from uridine 5-triphosphate), a reaction catalyzed by the N-terminal domain. The chain is Bifunctional protein GlmU from Salmonella agona (strain SL483).